Reading from the N-terminus, the 485-residue chain is Glutamyl-tRNA(Gln) amidotransferase subunit A (485 aa).

Residues Lys-78 and Ser-153 each act as charge relay system in the active site. Ser-177 (acyl-ester intermediate) is an active-site residue.

This sequence belongs to the amidase family. GatA subfamily. As to quaternary structure, heterotrimer of A, B and C subunits.

The catalysed reaction is L-glutamyl-tRNA(Gln) + L-glutamine + ATP + H2O = L-glutaminyl-tRNA(Gln) + L-glutamate + ADP + phosphate + H(+). In terms of biological role, allows the formation of correctly charged Gln-tRNA(Gln) through the transamidation of misacylated Glu-tRNA(Gln) in organisms which lack glutaminyl-tRNA synthetase. The reaction takes place in the presence of glutamine and ATP through an activated gamma-phospho-Glu-tRNA(Gln). This is Glutamyl-tRNA(Gln) amidotransferase subunit A from Bacillus cereus (strain G9842).